Here is a 232-residue protein sequence, read N- to C-terminus: Small ribosomal subunit protein uS2 (232 aa).

Belongs to the universal ribosomal protein uS2 family.

This is Small ribosomal subunit protein uS2 from Alkaliphilus oremlandii (strain OhILAs) (Clostridium oremlandii (strain OhILAs)).